Here is a 648-residue protein sequence, read N- to C-terminus: Pesticidal crystal protein Cry19Aa (648 aa).

This sequence belongs to the delta endotoxin family.

In terms of biological role, promotes colloidosmotic lysis by binding to the midgut epithelial cells of mosquitos. This chain is Pesticidal crystal protein Cry19Aa (cry19Aa), found in Bacillus thuringiensis subsp. jegathesan.